Reading from the N-terminus, the 544-residue chain is Putative ligase Rv1013 (544 aa).

Residue Lys528 forms an Isoglutamyl lysine isopeptide (Lys-Gln) (interchain with Q-Cter in protein Pup) linkage.

This sequence belongs to the ATP-dependent AMP-binding enzyme family. In terms of processing, pupylated at Lys-528 by the prokaryotic ubiquitin-like protein Pup, which probably leads to its degradation by the proteasome.

This chain is Putative ligase Rv1013 (pks16), found in Mycobacterium tuberculosis (strain ATCC 25618 / H37Rv).